The primary structure comprises 349 residues: Anthranilate phosphoribosyltransferase (349 aa).

5-phospho-alpha-D-ribose 1-diphosphate-binding positions include G82, 85–86 (GD), 92–95 (NVST), 110–118 (KHGNRAVSG), and S122. Anthranilate is bound at residue G82. S94 contributes to the Mg(2+) binding site. N113 serves as a coordination point for anthranilate. R168 provides a ligand contact to anthranilate. Residues D227 and E228 each coordinate Mg(2+).

The protein belongs to the anthranilate phosphoribosyltransferase family. In terms of assembly, homodimer. Requires Mg(2+) as cofactor.

It catalyses the reaction N-(5-phospho-beta-D-ribosyl)anthranilate + diphosphate = 5-phospho-alpha-D-ribose 1-diphosphate + anthranilate. It functions in the pathway amino-acid biosynthesis; L-tryptophan biosynthesis; L-tryptophan from chorismate: step 2/5. Its function is as follows. Catalyzes the transfer of the phosphoribosyl group of 5-phosphorylribose-1-pyrophosphate (PRPP) to anthranilate to yield N-(5'-phosphoribosyl)-anthranilate (PRA). This chain is Anthranilate phosphoribosyltransferase, found in Pseudomonas savastanoi pv. phaseolicola (strain 1448A / Race 6) (Pseudomonas syringae pv. phaseolicola (strain 1448A / Race 6)).